Consider the following 473-residue polypeptide: GDP-fucose protein O-fucosyltransferase 2 (473 aa).

Positions 1 to 25 (MKNMIYNLISISLYSLIIILTDIYA) are cleaved as a signal peptide. GDP-beta-L-fucose-binding positions include 59–63 (GEGFN), 283–285 (HLR), and 379–380 (RF). The active-site Proton acceptor is the glutamate 60.

The protein belongs to the glycosyltransferase 68 family.

It is found in the endoplasmic reticulum. It carries out the reaction L-seryl-[protein] + GDP-beta-L-fucose = 3-O-(alpha-L-fucosyl)-L-seryl-[protein] + GDP + H(+). It catalyses the reaction L-threonyl-[protein] + GDP-beta-L-fucose = 3-O-(alpha-L-fucosyl)-L-threonyl-[protein] + GDP + H(+). The protein operates within protein modification; protein glycosylation. Its function is as follows. Catalyzes the reaction that attaches fucose through an O-glycosidic linkage to a conserved serine or threonine residue in the consensus sequence C1-X-X-S/T-C2 of thrombospondin type I repeats (TSRs) where C1 and C2 are the first and second cysteines of the repeat, respectively. O-fucosylates sporozoite proteins CSP and TRAP. O-fucosylation regulates stability and intracellular trafficking of TRAP but not of CSP. Dispensable for parasite transmission to the mosquito vector and/or infection of the vertebrate host hepatocytes. The protein is GDP-fucose protein O-fucosyltransferase 2 of Plasmodium berghei (strain Anka).